The following is a 402-amino-acid chain: Type II NADH:quinone oxidoreductase (402 aa).

Residues 12 to 16 (GAGYA), 39 to 40 (NK), and V83 each bind FAD. E172 is an active-site residue. FAD is bound by residues D302, 319 to 320 (AQ), and K379.

The protein belongs to the NADH dehydrogenase family. Requires FAD as cofactor.

Its subcellular location is the cell membrane. It carries out the reaction a quinone + NADH + H(+) = a quinol + NAD(+). Alternative, nonproton pumping NADH:quinone oxidoreductase that delivers electrons to the respiratory chain by oxidation of NADH and reduction of quinones, and contributes to the regeneration of NAD(+). This is Type II NADH:quinone oxidoreductase from Staphylococcus saprophyticus subsp. saprophyticus (strain ATCC 15305 / DSM 20229 / NCIMB 8711 / NCTC 7292 / S-41).